Reading from the N-terminus, the 419-residue chain is Tyrosine--tRNA ligase (419 aa).

Residue Tyr34 participates in L-tyrosine binding. The 'HIGH' region motif lies at 39-48 (PTADSLHLGN). Positions 169 and 173 each coordinate L-tyrosine. The short motif at 229–233 (KFGKS) is the 'KMSKS' region element. Lys232 is an ATP binding site. An S4 RNA-binding domain is found at 353-419 (LTLIELLISA…GKKKNFVLTY (67 aa)).

This sequence belongs to the class-I aminoacyl-tRNA synthetase family. TyrS type 1 subfamily. As to quaternary structure, homodimer.

It is found in the cytoplasm. The enzyme catalyses tRNA(Tyr) + L-tyrosine + ATP = L-tyrosyl-tRNA(Tyr) + AMP + diphosphate + H(+). In terms of biological role, catalyzes the attachment of tyrosine to tRNA(Tyr) in a two-step reaction: tyrosine is first activated by ATP to form Tyr-AMP and then transferred to the acceptor end of tRNA(Tyr). This chain is Tyrosine--tRNA ligase, found in Lactococcus lactis subsp. cremoris (strain SK11).